The sequence spans 261 residues: Ribosomal RNA small subunit methyltransferase J (261 aa).

Residues 111-112 (RD), 127-128 (ER), 163-164 (SS), and D181 contribute to the S-adenosyl-L-methionine site.

The protein belongs to the methyltransferase superfamily. RsmJ family.

Its subcellular location is the cytoplasm. It catalyses the reaction guanosine(1516) in 16S rRNA + S-adenosyl-L-methionine = N(2)-methylguanosine(1516) in 16S rRNA + S-adenosyl-L-homocysteine + H(+). Functionally, specifically methylates the guanosine in position 1516 of 16S rRNA. In Shewanella sp. (strain MR-4), this protein is Ribosomal RNA small subunit methyltransferase J.